The chain runs to 453 residues: Tol-Pal system protein TolB (453 aa).

Residues 1 to 31 (MINNLSISMTKVIKIILAIIIILFNTLSIFA) form the signal peptide.

Belongs to the TolB family. As to quaternary structure, the Tol-Pal system is composed of five core proteins: the inner membrane proteins TolA, TolQ and TolR, the periplasmic protein TolB and the outer membrane protein Pal. They form a network linking the inner and outer membranes and the peptidoglycan layer.

Its subcellular location is the periplasm. Functionally, part of the Tol-Pal system, which plays a role in outer membrane invagination during cell division and is important for maintaining outer membrane integrity. This Orientia tsutsugamushi (strain Ikeda) (Rickettsia tsutsugamushi) protein is Tol-Pal system protein TolB.